The chain runs to 281 residues: Protein DOG1-like 1 (281 aa).

A DOG1 domain is found at 9-265 (EKLQQDCYNE…HEWGKSREHR (257 aa)). A disordered region spans residues 262 to 281 (REHRRLEASGGDSGGNVTRE).

This is Protein DOG1-like 1 from Arabidopsis thaliana (Mouse-ear cress).